A 219-amino-acid chain; its full sequence is Large ribosomal subunit protein uL3 (219 aa).

The interval 140–163 is disordered; the sequence is SASHGAHRNHRKPGSIGASSTPSR.

Belongs to the universal ribosomal protein uL3 family. Part of the 50S ribosomal subunit. Forms a cluster with proteins L14 and L19.

One of the primary rRNA binding proteins, it binds directly near the 3'-end of the 23S rRNA, where it nucleates assembly of the 50S subunit. This chain is Large ribosomal subunit protein uL3, found in Leifsonia xyli subsp. xyli (strain CTCB07).